Reading from the N-terminus, the 713-residue chain is Phosphoribosylformylglycinamidine synthase subunit PurL (713 aa).

The segment covering 1–17 (MSLSPSDRELVTEELGR) has biased composition (basic and acidic residues). Residues 1–20 (MSLSPSDRELVTEELGREPT) form a disordered region. Histidine 34 is a catalytic residue. ATP is bound at residue tyrosine 37. Glutamate 85 is a binding site for Mg(2+). Substrate is bound by residues 86–89 (SHNH) and arginine 108. The active-site Proton acceptor is the histidine 87. A Mg(2+)-binding site is contributed by aspartate 109. Glutamine 233 contributes to the substrate binding site. Aspartate 261 contacts Mg(2+). Residue 305–307 (ESQ) coordinates substrate. ATP is bound by residues aspartate 480 and glycine 517. Asparagine 518 serves as a coordination point for Mg(2+). Serine 520 is a binding site for substrate.

It belongs to the FGAMS family. As to quaternary structure, monomer. Part of the FGAM synthase complex composed of 1 PurL, 1 PurQ and 2 PurS subunits.

It localises to the cytoplasm. It catalyses the reaction N(2)-formyl-N(1)-(5-phospho-beta-D-ribosyl)glycinamide + L-glutamine + ATP + H2O = 2-formamido-N(1)-(5-O-phospho-beta-D-ribosyl)acetamidine + L-glutamate + ADP + phosphate + H(+). It functions in the pathway purine metabolism; IMP biosynthesis via de novo pathway; 5-amino-1-(5-phospho-D-ribosyl)imidazole from N(2)-formyl-N(1)-(5-phospho-D-ribosyl)glycinamide: step 1/2. In terms of biological role, part of the phosphoribosylformylglycinamidine synthase complex involved in the purines biosynthetic pathway. Catalyzes the ATP-dependent conversion of formylglycinamide ribonucleotide (FGAR) and glutamine to yield formylglycinamidine ribonucleotide (FGAM) and glutamate. The FGAM synthase complex is composed of three subunits. PurQ produces an ammonia molecule by converting glutamine to glutamate. PurL transfers the ammonia molecule to FGAR to form FGAM in an ATP-dependent manner. PurS interacts with PurQ and PurL and is thought to assist in the transfer of the ammonia molecule from PurQ to PurL. This chain is Phosphoribosylformylglycinamidine synthase subunit PurL, found in Natronomonas pharaonis (strain ATCC 35678 / DSM 2160 / CIP 103997 / JCM 8858 / NBRC 14720 / NCIMB 2260 / Gabara) (Halobacterium pharaonis).